The primary structure comprises 227 residues: Cytidylate kinase (227 aa).

ATP is bound at residue 12–20 (GPSGAGKGT).

The protein belongs to the cytidylate kinase family. Type 1 subfamily.

The protein localises to the cytoplasm. The enzyme catalyses CMP + ATP = CDP + ADP. It carries out the reaction dCMP + ATP = dCDP + ADP. This Shigella sonnei (strain Ss046) protein is Cytidylate kinase.